A 484-amino-acid polypeptide reads, in one-letter code: Probable peptide/nitrate transporter At3g43790 (484 aa).

12 helical membrane-spanning segments follow: residues 39–59, 76–96, 107–127, 129–149, 168–188, 210–230, 278–298, 318–338, 355–375, 381–401, 416–436, and 460–480; these read FIWL…PYIY, FYAG…SIFW, PIIL…GLST, FWLA…LGVI, VVST…GYLA, FLPS…CWWL, MAII…NEIF, VGEV…LVYP, VLLI…GVTL, CASI…FIML, ISMT…GVLF, and VFLV…IPYI.

It belongs to the major facilitator superfamily.

The protein resides in the membrane. This chain is Probable peptide/nitrate transporter At3g43790 (ZIFL2), found in Arabidopsis thaliana (Mouse-ear cress).